Consider the following 198-residue polypeptide: Single-stranded DNA cytosine deaminase (198 aa).

The short motif at 1-30 (MDSLLMKQRKFLYHFKNVRWAKGRHETYLC) is the Bipartite nuclear localization signal element. Positions 2–26 (DSLLMKQRKFLYHFKNVRWAKGRHE) are interaction with SUPT6H. In terms of domain architecture, CMP/dCMP-type deaminase spans 23–129 (GRHETYLCYV…KAEPEGLRRL (107 aa)). Threonine 27 is subject to Phosphothreonine; by PKA. Phosphoserine; by PKA is present on serine 38. Residues 39 to 42 (ATSF) are important for interaction with CTNNBL1. Histidine 56 serves as a coordination point for Zn(2+). Residue glutamate 58 is the Proton donor of the active site. 2 residues coordinate Zn(2+): cysteine 87 and cysteine 90. Residues 88-116 (YDCARHVADFLRGYPNLSLRIFAARLYFC) form a required for interaction with RNF126 region. The short motif at 183–198 (LYEVDDLRDAFRTLGL) is the Nuclear export signal element.

This sequence belongs to the cytidine and deoxycytidylate deaminase family. Interacts with CTNNBL1; the interaction is important for the immunoglobulin switch activity of AICDA. Interacts (via its NLS) with KPNA1. Interacts with PKA/PRKACA and PRKAR1A/PKR1. Interacts with SUPT6H, TRIM28 and NCL. Directly interacts with MCM3AP; this interaction may favor AICDA recruitment to immunoglobulin variable region genes, hence promoting somatic hypermutations. The cofactor is Zn(2+). Ser-38 is the major site whereas Thr-27 is the minor site of phosphorylation. Phosphorylation regulates its class-switch recombination activity. In terms of processing, probably monoubiquitinated on several residues by RNF126. In terms of tissue distribution, expressed in thymus, lung, spleen, kidney, small intestine, lymph node and tonsil.

Its subcellular location is the nucleus. It localises to the cytoplasm. The enzyme catalyses a 2'-deoxycytidine in single-stranded DNA + H2O + H(+) = a 2'-deoxyuridine in single-stranded DNA + NH4(+). Its function is as follows. Single-stranded DNA-specific cytidine deaminase. Involved in somatic hypermutation (SHM), gene conversion, and class-switch recombination (CSR) in B-lymphocytes by deaminating C to U during transcription of Ig-variable (V) and Ig-switch (S) region DNA. Required for several crucial steps of B-cell terminal differentiation necessary for efficient antibody responses. May also play a role in the epigenetic regulation of gene expression by participating in DNA demethylation. This chain is Single-stranded DNA cytosine deaminase (AICDA), found in Canis lupus familiaris (Dog).